The primary structure comprises 483 residues: Deoxyribodipyrimidine photo-lyase (483 aa).

The 135-residue stretch at 2-136 (QKNLIWFRND…LVKGFHDNLL (135 aa)) folds into the Photolyase/cryptochrome alpha/beta domain. (6R)-5,10-methylene-5,6,7,8-tetrahydrofolate-binding residues include Asn109 and Glu110. Tyr225 is a binding site for FAD. Arg229 contacts DNA. 237-241 (TSMLS) serves as a coordination point for FAD. Interaction with DNA regions lie at residues 278–285 (QILWREFY) and 345–346 (NR). 376-378 (DGD) provides a ligand contact to FAD. Gln408 lines the DNA pocket.

Belongs to the DNA photolyase class-1 family. As to quaternary structure, monomer. It depends on FAD as a cofactor. Requires (6R)-5,10-methylene-5,6,7,8-tetrahydrofolate as cofactor.

It carries out the reaction cyclobutadipyrimidine (in DNA) = 2 pyrimidine residues (in DNA).. Its function is as follows. Involved in repair of UV radiation-induced DNA damage. Catalyzes the light-dependent monomerization (300-600 nm) of cyclobutyl pyrimidine dimers (in cis-syn configuration), which are formed between adjacent bases on the same DNA strand upon exposure to ultraviolet radiation. This Buchnera aphidicola subsp. Acyrthosiphon pisum (strain APS) (Acyrthosiphon pisum symbiotic bacterium) protein is Deoxyribodipyrimidine photo-lyase (phrB).